The chain runs to 272 residues: 2-dehydro-3-deoxyphosphooctonate aldolase (272 aa).

Belongs to the KdsA family.

The protein resides in the cytoplasm. The enzyme catalyses D-arabinose 5-phosphate + phosphoenolpyruvate + H2O = 3-deoxy-alpha-D-manno-2-octulosonate-8-phosphate + phosphate. It functions in the pathway carbohydrate biosynthesis; 3-deoxy-D-manno-octulosonate biosynthesis; 3-deoxy-D-manno-octulosonate from D-ribulose 5-phosphate: step 2/3. Its pathway is bacterial outer membrane biogenesis; lipopolysaccharide biosynthesis. This Pelobacter propionicus (strain DSM 2379 / NBRC 103807 / OttBd1) protein is 2-dehydro-3-deoxyphosphooctonate aldolase.